Here is a 732-residue protein sequence, read N- to C-terminus: Interleukin-31 receptor subunit alpha (732 aa).

The N-terminal stretch at M1–A19 is a signal peptide. At A20–E519 the chain is on the extracellular side. 5 consecutive Fibronectin type-III domains span residues K24–T122, P124–E225, E223–T315, P319–A416, and P421–F515. N-linked (GlcNAc...) asparagine glycosylation is found at N37, N67, N93, N166, N187, N277, N283, N395, N455, and N504. Residues I520–A540 traverse the membrane as a helical segment. Residues Y541–V732 are Cytoplasmic-facing.

This sequence belongs to the type I cytokine receptor family. Type 2 subfamily. As to quaternary structure, heterodimer with OSMR. Interacts with JAK1 and STAT3. N-glycosylated. As to expression, expressed in CD14- and CD56-positive blood cells. Expressed in macrophages. Expressed in keratinocytes. Expressed in a subset of dorsal root ganglia neurons (at protein level). Expressed at low levels in testis, ovary, brain, prostate, placenta, thymus, bone marrow, trachea and skin. Expressed in bronchial and alveolar epithelial cells and pulmonary fibroblasts. Detected in all of the myelomonocytic lineage. Isoform 6: Expressed at higher levels in lesional skin compared to healthy skin of atopic dermatitis patients.

The protein resides in the cell membrane. Its subcellular location is the presynaptic cell membrane. The protein localises to the cell projection. It localises to the axon. Functionally, associates with OSMR to form the interleukin-31 receptor which activates STAT3 and to a lower extent STAT1 and STAT5. May function in skin immunity. Mediates IL31-induced itch, probably in a manner dependent on cation channels TRPA1 and TRPV1. Positively regulates numbers and cycling status of immature subsets of myeloid progenitor cells in bone marrow in vivo and enhances myeloid progenitor cell survival in vitro. This chain is Interleukin-31 receptor subunit alpha (IL31RA), found in Homo sapiens (Human).